The primary structure comprises 231 residues: Androgen-dependent TFPI-regulating protein (231 aa).

At 1–7 (MTRTTTC) the chain is on the cytoplasmic side. A helical transmembrane segment spans residues 8–28 (VYHFLVWNWYIFLNYYIPLIG). At 29 to 45 (KDDEKLKEFHDGGRSKY) the chain is on the extracellular side. Residues 46-66 (LTLLNLLLQAIFFGVACLDDV) traverse the membrane as a helical segment. Residues 67-85 (LKRIIGRKDIKFITSTRDL) are Cytoplasmic-facing. The helical transmembrane segment at 86–106 (LFSTLVFPISTFIFLVFWTLF) threads the bilayer. Over 107-123 (YYDRSLIYPKGLDDYFP) the chain is Extracellular. Residues 124–144 (AWLNHAMHTYILLFVLVETIL) traverse the membrane as a helical segment. Residues 145–154 (RPHHYPSKKL) lie on the Cytoplasmic side of the membrane. Residues 155 to 172 (GLALLGACNLAYITRVLW) form a helical membrane-spanning segment. Topologically, residues 173 to 190 (RYSQTGNWVYPVFASLNP) are extracellular. The helical transmembrane segment at 191-211 (LGIIIFFLVCYILNASIYLVG) threads the bilayer. Topologically, residues 212–231 (EKINHWKWGATVKPLMKKKK) are cytoplasmic.

The protein belongs to the AIG1 family. Highly expressed in flank organs and weakly in testis and earlobes.

Its subcellular location is the cell membrane. The catalysed reaction is 9-hexadecanoyloxy-octadecanoate + H2O = 9-hydroxy-octadecanoate + hexadecanoate + H(+). The enzyme catalyses 12-hexadecanoyloxy-octadecanoate + H2O = 12-hydroxyoctadecanoate + hexadecanoate + H(+). It catalyses the reaction 9-(9Z-hexadecenoyloxy)-octadecanoate + H2O = (9Z)-hexadecenoate + 9-hydroxy-octadecanoate + H(+). It carries out the reaction 12-(9Z-hexadecenoyloxy)-octadecanoate + H2O = 12-hydroxyoctadecanoate + (9Z)-hexadecenoate + H(+). The catalysed reaction is 13-(9Z-hexadecenoyloxy)-octadecanoate + H2O = 13-hydroxy-octadecanoate + (9Z)-hexadecenoate + H(+). The enzyme catalyses 9-octadecanoyloxy-octadecanoate + H2O = 9-hydroxy-octadecanoate + octadecanoate + H(+). It catalyses the reaction 12-octadecanoyloxy-octadecanoate + H2O = 12-hydroxyoctadecanoate + octadecanoate + H(+). It carries out the reaction 13-octadecanoyloxy-octadecanoate + H2O = 13-hydroxy-octadecanoate + octadecanoate + H(+). The catalysed reaction is 9-(9Z-octadecenoyloxy)-octadecanoate + H2O = 9-hydroxy-octadecanoate + (9Z)-octadecenoate + H(+). The enzyme catalyses 12-(9Z-octadecenoyloxy)-octadecanoate + H2O = 12-hydroxyoctadecanoate + (9Z)-octadecenoate + H(+). It catalyses the reaction 13-(9Z-octadecenoyloxy)-octadecanoate + H2O = 13-hydroxy-octadecanoate + (9Z)-octadecenoate + H(+). It carries out the reaction 5-(9Z-octadecenoyloxy)-octadecanoate + H2O = 5-hydroxy-octadecanoate + (9Z)-octadecenoate + H(+). Functionally, hydrolyzes bioactive fatty-acid esters of hydroxy-fatty acids (FAHFAs), but not other major classes of lipids. Shows a preference for FAHFAs with branching distal from the carboxylate head group of the lipids. Regulates the expression and the cell-associated anticoagulant activity of the inhibitor TFPI in endothelial cells (in vitro). This is Androgen-dependent TFPI-regulating protein (ADTRP) from Mesocricetus auratus (Golden hamster).